The primary structure comprises 513 residues: uncharacterized protein (513 aa).

The region spanning 3-61 (NLKIGQKLQLEIERMGINGEGIGVISGRLVFIPYALPGEEVLVEITENARNFSRAKLVK) is the TRAM domain. S-adenosyl-L-methionine is bound by residues Q309, Y338, D359, and D407. C434 functions as the Nucleophile in the catalytic mechanism.

This sequence belongs to the class I-like SAM-binding methyltransferase superfamily. RNA M5U methyltransferase family.

This is an uncharacterized protein from Lactococcus lactis subsp. lactis (strain IL1403) (Streptococcus lactis).